The chain runs to 344 residues: Protein BREVIS RADIX (344 aa).

A BRX 1 domain is found at 139 to 194 (KEWMAQVEPGVHITFASLPTGGNDLKRIRFSREMFDKWQAQRWWGENYDKIVELYN). Residues 203–286 (LQTPARSDDQ…DPPSMSNASE (84 aa)) form a disordered region. Positions 223–233 (DSARESKDWTP) are enriched in basic and acidic residues. Positions 248–264 (YGGSSNYGPGSYHGGPP) are enriched in low complexity. Residues 289–344 (AEWIEEDEPGVYITIRQLSDGTRELRRVRFSRERFGEVHAKTWWEQNRERIQTQYL) enclose the BRX 2 domain.

It belongs to the BRX family. In terms of assembly, homodimer and heterodimer with BRXL1. Interacts with NGA1 and ARF5. In terms of tissue distribution, expressed in the developing protophloem up to the elongation zone in root meristem of young seedlings, in the columella and the phloem vasculature throughout the root and in the phloem vasculature in the shoot. Detected in the shoot meristem and in primordia. Low expression in stomata. Confined to sieve element precursor cells and to protophloem.

It localises to the nucleus. Its subcellular location is the cell membrane. In terms of biological role, acts as a regulator of cell proliferation and elongation in the root and shoot. Regulates roots architecture and primary root protophloem differentiation. BRX, BAM3, and CLE45 act together to regulate the transition of protophloem cells from proliferation to differentiation, thus impinging on postembryonic growth capacity of the root meristem. Probable transcription regulator. Regulated by the auxin response factor ARF5. Polarly localized in vascular cells and subject to endocytic recycling. Required for CPD expression and for correct nuclear auxin response. Mediates cross-talk between the auxin and brassinosteroid pathways. BRX is a target for auxin-induced, proteasome-mediated degradation. The polypeptide is Protein BREVIS RADIX (Arabidopsis thaliana (Mouse-ear cress)).